The primary structure comprises 1251 residues: Centrosomal protein of 162 kDa (1251 aa).

Composition is skewed to basic and acidic residues over residues 1–19 and 144–159; these read MLEKFHKNKKDSYLNKEEG and ESEKEVESTAEEKCES. 3 disordered regions span residues 1-33, 144-183, and 442-473; these read MLEKFHKNKKDSYLNKEEGSLTSDGSDSPKEIL, ESEKEVESTAEEKCESYSEDFEEDTDANPAFKTEESQEPN, and LHKKKSSYGPHGVVRSSGYGKSTSYSKQSIPA. The span at 160–169 shows a compositional bias: acidic residues; sequence YSEDFEEDTD. Over residues 457–470 the composition is skewed to low complexity; that stretch reads SSGYGKSTSYSKQS. Coiled-coil stretches lie at residues 559–782, 813–1165, and 1210–1242; these read EREL…VQIT, YAEN…SQAT, and KVAELNGRISTQEILIKHLQEQISEHQRHQEAL. The segment at 1078–1100 is disordered; it reads SDNNLRNKTDNKENRQESLKNNT. The span at 1082–1095 shows a compositional bias: basic and acidic residues; it reads LRNKTDNKENRQES.

It belongs to the CEP162 family. In terms of tissue distribution, expressed in retina and brain (at protein level).

The protein resides in the cytoplasm. It localises to the cytoskeleton. The protein localises to the microtubule organizing center. Its subcellular location is the centrosome. It is found in the centriole. The protein resides in the nucleus. In terms of biological role, required to promote assembly of the transition zone in primary cilia. Acts by specifically recognizing and binding the axonemal microtubule. Plays a role in cell proliferation and differentiation in the neuroretina. Has an ATPase activity in vitro. This chain is Centrosomal protein of 162 kDa (CEP162), found in Coturnix coturnix (Common quail).